A 269-amino-acid polypeptide reads, in one-letter code: MSDLPGIVVTGASGRMGQMLMKTVLASGKARLVGAVERPGSDWVGRDAGAAMGGAAIGVTVTDDPLAAFAQAQAVIDFTAPEATVQFAELAAQARAVHVIGTTGLEPVHLERLAWAAHHAVIVRAGNMSLGVNLLTRLTQKVAEALDEDWDIEVVEAHHRMKVDAPSGTALMLGEAAARGRGVDLAQARVSGRDGITGPRAPGSIGFSAIRGGDIVGEHDVIFAAAGERITLRHVATDRAIFARGALKAALWGQDKRPGQYDMMDVLGL.

Residues 11 to 16 and E37 contribute to the NAD(+) site; that span reads GASGRM. Residue R38 participates in NADP(+) binding. NAD(+) is bound by residues 101–103 and 125–128; these read GTT and AGNM. Residue H158 is the Proton donor/acceptor of the active site. H159 contacts (S)-2,3,4,5-tetrahydrodipicolinate. K162 serves as the catalytic Proton donor. Residue 168–169 coordinates (S)-2,3,4,5-tetrahydrodipicolinate; that stretch reads GT.

The protein belongs to the DapB family.

The protein localises to the cytoplasm. It catalyses the reaction (S)-2,3,4,5-tetrahydrodipicolinate + NAD(+) + H2O = (2S,4S)-4-hydroxy-2,3,4,5-tetrahydrodipicolinate + NADH + H(+). It carries out the reaction (S)-2,3,4,5-tetrahydrodipicolinate + NADP(+) + H2O = (2S,4S)-4-hydroxy-2,3,4,5-tetrahydrodipicolinate + NADPH + H(+). It functions in the pathway amino-acid biosynthesis; L-lysine biosynthesis via DAP pathway; (S)-tetrahydrodipicolinate from L-aspartate: step 4/4. Its function is as follows. Catalyzes the conversion of 4-hydroxy-tetrahydrodipicolinate (HTPA) to tetrahydrodipicolinate. This chain is 4-hydroxy-tetrahydrodipicolinate reductase, found in Cereibacter sphaeroides (strain ATCC 17029 / ATH 2.4.9) (Rhodobacter sphaeroides).